A 177-amino-acid polypeptide reads, in one-letter code: Large ribosomal subunit protein uL6 (177 aa).

This sequence belongs to the universal ribosomal protein uL6 family. In terms of assembly, part of the 50S ribosomal subunit.

Functionally, this protein binds to the 23S rRNA, and is important in its secondary structure. It is located near the subunit interface in the base of the L7/L12 stalk, and near the tRNA binding site of the peptidyltransferase center. This Bradyrhizobium sp. (strain ORS 278) protein is Large ribosomal subunit protein uL6.